The primary structure comprises 31 residues: Cytochrome b6-f complex subunit 6 (31 aa).

A helical transmembrane segment spans residues 4–24 (ITSYFGFLLAALTITPALFIG).

The protein belongs to the PetL family. The 4 large subunits of the cytochrome b6-f complex are cytochrome b6, subunit IV (17 kDa polypeptide, PetD), cytochrome f and the Rieske protein, while the 4 small subunits are PetG, PetL, PetM and PetN. The complex functions as a dimer.

The protein localises to the plastid. It localises to the chloroplast thylakoid membrane. Functionally, component of the cytochrome b6-f complex, which mediates electron transfer between photosystem II (PSII) and photosystem I (PSI), cyclic electron flow around PSI, and state transitions. PetL is important for photoautotrophic growth as well as for electron transfer efficiency and stability of the cytochrome b6-f complex. The sequence is that of Cytochrome b6-f complex subunit 6 from Saccharum barberi (Indian sugarcane).